The chain runs to 114 residues: Probable gas vesicle protein J2 (114 aa).

Basic and acidic residues predominate over residues methionine 1–glycine 10. The segment at methionine 1–glycine 21 is disordered.

Belongs to the gas vesicle GvpA family. Interacts with GvpA.

It is found in the gas vesicle. In terms of biological role, a minor component of the gas vesicle, might be involved in nucleating gas vesicle formation. Gas vesicles (GV) are hollow, gas filled proteinaceous nanostructures. It is not clear what function GVs perform in soil bacteria. In Streptomyces coelicolor (strain ATCC BAA-471 / A3(2) / M145), this protein is Probable gas vesicle protein J2.